The primary structure comprises 88 residues: Apolipoprotein C-I (88 aa).

Positions 1 to 26 (MRLFLSLPVLVVVLAMVLEGPAPAQA) are cleaved as a signal peptide.

The protein belongs to the apolipoprotein C1 family.

It is found in the secreted. Inhibitor of lipoprotein binding to the low density lipoprotein (LDL) receptor, LDL receptor-related protein, and very low density lipoprotein (VLDL) receptor. Associates with high density lipoproteins (HDL) and the triacylglycerol-rich lipoproteins in the plasma and makes up about 10% of the protein of the VLDL and 2% of that of HDL. Appears to interfere directly with fatty acid uptake and is also the major plasma inhibitor of cholesteryl ester transfer protein (CETP). Binds free fatty acids and reduces their intracellular esterification. Modulates the interaction of APOE with beta-migrating VLDL and inhibits binding of beta-VLDL to the LDL receptor-related protein. This is Apolipoprotein C-I (APOC1) from Ailurus fulgens (Himalayan red panda).